The following is a 344-amino-acid chain: Methionine import ATP-binding protein MetN 1 (344 aa).

The ABC transporter domain occupies 2-241; sequence IELRNLSQRF…PHHEVTRALI (240 aa). 38 to 45 is a binding site for ATP; the sequence is GRSGAGKS.

It belongs to the ABC transporter superfamily. Methionine importer (TC 3.A.1.24) family. In terms of assembly, the complex is composed of two ATP-binding proteins (MetN), two transmembrane proteins (MetI) and a solute-binding protein (MetQ).

It localises to the cell inner membrane. The enzyme catalyses L-methionine(out) + ATP + H2O = L-methionine(in) + ADP + phosphate + H(+). It carries out the reaction D-methionine(out) + ATP + H2O = D-methionine(in) + ADP + phosphate + H(+). Functionally, part of the ABC transporter complex MetNIQ involved in methionine import. Responsible for energy coupling to the transport system. This chain is Methionine import ATP-binding protein MetN 1, found in Burkholderia lata (strain ATCC 17760 / DSM 23089 / LMG 22485 / NCIMB 9086 / R18194 / 383).